Here is a 73-residue protein sequence, read N- to C-terminus: Putative sulfur carrier protein AF_0556 (73 aa).

Cys11 functions as the Cysteine persulfide intermediate in the catalytic mechanism.

Belongs to the sulfur carrier protein TusA family.

The chain is Putative sulfur carrier protein AF_0556 from Archaeoglobus fulgidus (strain ATCC 49558 / DSM 4304 / JCM 9628 / NBRC 100126 / VC-16).